Consider the following 360-residue polypeptide: uncharacterized protein (360 aa).

The ABC transporter domain occupies 4–235; the sequence is LSLQHIQKIY…PANMFVAGFI (232 aa). 37–44 provides a ligand contact to ATP; sequence GPSGCGKS.

This sequence belongs to the ABC transporter superfamily.

This is an uncharacterized protein from Escherichia coli O157:H7.